The chain runs to 359 residues: uncharacterized protein (359 aa).

An N-terminal signal peptide occupies residues 1–15 (MSIVLAIDTATAAVT). The region spanning 212-359 (IVIGTLTPAD…DAYLMRREAQ (148 aa)) is the N-acetyltransferase domain.

This is an uncharacterized protein from Mycobacterium leprae (strain TN).